The sequence spans 126 residues: MAFNGTWQVYSQENYEDFLKAIALPDDIIKAAKDVKPVTEIRQTGNTFVVTSKTPNKSVTNSFTLGKEADMTTMDGKKVKCTVNLVDGKLVAKSDKFIHEQEIVGNEMVETITSGSATFTRRSKKI.

Cholate is bound by residues 54–56 (TPN), 99–101 (HEQ), and R121.

This sequence belongs to the calycin superfamily. Fatty-acid binding protein (FABP) family.

Its subcellular location is the cytoplasm. FABPs are thought to play a role in the intracellular transport of long-chain fatty acids and their acyl-CoA esters. This Anolis pulchellus (Common grass anole) protein is Fatty acid-binding protein, liver.